A 65-amino-acid polypeptide reads, in one-letter code: pH-response transcription factor pacC/RIM101 (65 aa).

Residues Leu-16–His-40 form a C2H2-type 1 zinc finger. The segment at His-46 to Val-65 adopts a C2H2-type 2; degenerate zinc-finger fold.

This sequence belongs to the pacC/RIM101 family.

The protein localises to the nucleus. Its function is as follows. Transcription factor that mediates regulation of both acid- and alkaline-expressed genes in response to ambient pH. At alkaline ambient pH, activates transcription of alkaline-expressed genes (including pac1 itself) and represses transcription of acid-expressed genes. The protein is pH-response transcription factor pacC/RIM101 (pac1) of Colletotrichum gloeosporioides (Anthracnose fungus).